A 585-amino-acid chain; its full sequence is CTP synthase (585 aa).

An amidoligase domain region spans residues M1–L281. S23 provides a ligand contact to CTP. S23 serves as a coordination point for UTP. Residues S24 to L29 and D81 contribute to the ATP site. 2 residues coordinate Mg(2+): D81 and E155. Residues D162 to E164, K202 to Q207, and K238 each bind CTP. UTP contacts are provided by residues K202–Q207 and K238. Residues R306–G554 form the Glutamine amidotransferase type-1 domain. G369 contributes to the L-glutamine binding site. Catalysis depends on C396, which acts as the Nucleophile; for glutamine hydrolysis. Residues L397–Q400, E419, and R480 each bind L-glutamine. Active-site residues include H527 and E529. The tract at residues I564–G585 is disordered. The segment covering H576–G585 has biased composition (basic and acidic residues).

The protein belongs to the CTP synthase family. As to quaternary structure, homotetramer.

The catalysed reaction is UTP + L-glutamine + ATP + H2O = CTP + L-glutamate + ADP + phosphate + 2 H(+). It carries out the reaction L-glutamine + H2O = L-glutamate + NH4(+). The enzyme catalyses UTP + NH4(+) + ATP = CTP + ADP + phosphate + 2 H(+). The protein operates within pyrimidine metabolism; CTP biosynthesis via de novo pathway; CTP from UDP: step 2/2. With respect to regulation, allosterically activated by GTP, when glutamine is the substrate; GTP has no effect on the reaction when ammonia is the substrate. The allosteric effector GTP functions by stabilizing the protein conformation that binds the tetrahedral intermediate(s) formed during glutamine hydrolysis. Inhibited by the product CTP, via allosteric rather than competitive inhibition. Functionally, catalyzes the ATP-dependent amination of UTP to CTP with either L-glutamine or ammonia as the source of nitrogen. Regulates intracellular CTP levels through interactions with the four ribonucleotide triphosphates. The polypeptide is CTP synthase (Mycolicibacterium gilvum (strain PYR-GCK) (Mycobacterium gilvum (strain PYR-GCK))).